The chain runs to 209 residues: tRNA (guanine-N(7)-)-methyltransferase (209 aa).

S-adenosyl-L-methionine contacts are provided by D35, E60, N87, and D113. Residue D113 is part of the active site. 2 residues coordinate substrate: K117 and D149.

The protein belongs to the class I-like SAM-binding methyltransferase superfamily. TrmB family.

It carries out the reaction guanosine(46) in tRNA + S-adenosyl-L-methionine = N(7)-methylguanosine(46) in tRNA + S-adenosyl-L-homocysteine. The protein operates within tRNA modification; N(7)-methylguanine-tRNA biosynthesis. Catalyzes the formation of N(7)-methylguanine at position 46 (m7G46) in tRNA. In Prochlorococcus marinus (strain AS9601), this protein is tRNA (guanine-N(7)-)-methyltransferase.